The chain runs to 67 residues: MDATAGLHLGFRRLGILTQAASPWNQRSTDVGFGRPPTTYNLLLAGIPVAYSLGLFIGGIGIQLFDI.

This is an uncharacterized protein from Vaccinia virus (strain Copenhagen) (VACV).